Here is a 190-residue protein sequence, read N- to C-terminus: Potassium-transporting ATPase KdpC subunit (190 aa).

Residues 13–33 (VGFLLLTLVCGVVYPGIVTII) traverse the membrane as a helical segment.

Belongs to the KdpC family. As to quaternary structure, the system is composed of three essential subunits: KdpA, KdpB and KdpC.

It localises to the cell membrane. Part of the high-affinity ATP-driven potassium transport (or Kdp) system, which catalyzes the hydrolysis of ATP coupled with the electrogenic transport of potassium into the cytoplasm. This subunit acts as a catalytic chaperone that increases the ATP-binding affinity of the ATP-hydrolyzing subunit KdpB by the formation of a transient KdpB/KdpC/ATP ternary complex. This chain is Potassium-transporting ATPase KdpC subunit, found in Listeria welshimeri serovar 6b (strain ATCC 35897 / DSM 20650 / CCUG 15529 / CIP 8149 / NCTC 11857 / SLCC 5334 / V8).